The primary structure comprises 326 residues: Delta-aminolevulinic acid dehydratase (326 aa).

Zn(2+)-binding residues include Cys119, Cys121, and Cys129. Catalysis depends on Lys198, which acts as the Schiff-base intermediate with substrate. Residues Arg208 and Arg220 each coordinate 5-aminolevulinate. Mg(2+) is bound at residue Glu236. Residue Lys251 is the Schiff-base intermediate with substrate of the active site. Residues Ser277 and Tyr316 each coordinate 5-aminolevulinate.

This sequence belongs to the ALAD family. In terms of assembly, homooctamer. It depends on Zn(2+) as a cofactor.

It catalyses the reaction 2 5-aminolevulinate = porphobilinogen + 2 H2O + H(+). Its pathway is porphyrin-containing compound metabolism; protoporphyrin-IX biosynthesis; coproporphyrinogen-III from 5-aminolevulinate: step 1/4. Functionally, catalyzes an early step in the biosynthesis of tetrapyrroles. Binds two molecules of 5-aminolevulinate per subunit, each at a distinct site, and catalyzes their condensation to form porphobilinogen. The protein is Delta-aminolevulinic acid dehydratase (hemB) of Synechococcus elongatus (strain ATCC 33912 / PCC 7942 / FACHB-805) (Anacystis nidulans R2).